The primary structure comprises 331 residues: Aspartate carbamoyltransferase catalytic subunit (331 aa).

Carbamoyl phosphate is bound by residues R76 and T77. Position 104 (K104) interacts with L-aspartate. The carbamoyl phosphate site is built by R126, H154, and Q157. L-aspartate is bound by residues R187 and R246. Residues G287 and P288 each coordinate carbamoyl phosphate.

It belongs to the aspartate/ornithine carbamoyltransferase superfamily. ATCase family. Heterododecamer (2C3:3R2) of six catalytic PyrB chains organized as two trimers (C3), and six regulatory PyrI chains organized as three dimers (R2).

The enzyme catalyses carbamoyl phosphate + L-aspartate = N-carbamoyl-L-aspartate + phosphate + H(+). The protein operates within pyrimidine metabolism; UMP biosynthesis via de novo pathway; (S)-dihydroorotate from bicarbonate: step 2/3. In terms of biological role, catalyzes the condensation of carbamoyl phosphate and aspartate to form carbamoyl aspartate and inorganic phosphate, the committed step in the de novo pyrimidine nucleotide biosynthesis pathway. This Dehalococcoides mccartyi (strain CBDB1) protein is Aspartate carbamoyltransferase catalytic subunit.